The sequence spans 197 residues: Holliday junction branch migration complex subunit RuvA (197 aa).

Positions 1–63 (MIEFIRGYVD…EDVLALYGFH (63 aa)) are domain I. A domain II region spans residues 64 to 142 (TRQERMLFAK…AIVPDAFPNL (79 aa)). Residues 143–149 (FTEPLEE) form a flexible linker region. The domain III stretch occupies residues 149–197 (ETNALSEAIEALKALGYADKEIQKVVPMLRQERLSTEGYIKLALQKLLK).

It belongs to the RuvA family. Homotetramer. Forms an RuvA(8)-RuvB(12)-Holliday junction (HJ) complex. HJ DNA is sandwiched between 2 RuvA tetramers; dsDNA enters through RuvA and exits via RuvB. An RuvB hexamer assembles on each DNA strand where it exits the tetramer. Each RuvB hexamer is contacted by two RuvA subunits (via domain III) on 2 adjacent RuvB subunits; this complex drives branch migration. In the full resolvosome a probable DNA-RuvA(4)-RuvB(12)-RuvC(2) complex forms which resolves the HJ.

The protein localises to the cytoplasm. The RuvA-RuvB-RuvC complex processes Holliday junction (HJ) DNA during genetic recombination and DNA repair, while the RuvA-RuvB complex plays an important role in the rescue of blocked DNA replication forks via replication fork reversal (RFR). RuvA specifically binds to HJ cruciform DNA, conferring on it an open structure. The RuvB hexamer acts as an ATP-dependent pump, pulling dsDNA into and through the RuvAB complex. HJ branch migration allows RuvC to scan DNA until it finds its consensus sequence, where it cleaves and resolves the cruciform DNA. This is Holliday junction branch migration complex subunit RuvA from Anoxybacillus flavithermus (strain DSM 21510 / WK1).